The primary structure comprises 152 residues: UPF0260 protein BAB1_1496 (152 aa).

It belongs to the UPF0260 family.

The polypeptide is UPF0260 protein BAB1_1496 (Brucella abortus (strain 2308)).